The primary structure comprises 232 residues: F420-dependent NADP reductase (232 aa).

Residues 15–18 (TGDQ), 37–38 (SR), K42, V80, V106, and A151 each bind NADP(+).

The protein belongs to the F420-dependent NADP reductase family. In terms of assembly, homotetramer.

It carries out the reaction reduced coenzyme F420-(gamma-L-Glu)(n) + NADP(+) = oxidized coenzyme F420-(gamma-L-Glu)(n) + NADPH + 2 H(+). Catalyzes the reduction of NADP(+) with F420H(2) via hydride transfer, and likely the reverse reaction, i.e. the reduction of F420 with NADPH. Probably functions in the regeneration of NADPH required in biosynthetic reactions. Is specific for reduced F420 as electron donor for the reduction of NADP; neither reduced FAD nor FMN can act as electron donor. The enzyme is also specific for NADP; NAD is not utilized as substrate. The chain is F420-dependent NADP reductase (fno) from Methanothermobacter thermautotrophicus (strain ATCC 29096 / DSM 1053 / JCM 10044 / NBRC 100330 / Delta H) (Methanobacterium thermoautotrophicum).